A 202-amino-acid chain; its full sequence is ATP-dependent dethiobiotin synthetase BioD (202 aa).

Residue 12–17 (GIGKTI) participates in ATP binding. Thr-16 contacts Mg(2+). Lys-32 is an active-site residue. Ser-36 is a substrate binding site. ATP is bound by residues Asp-43, 94 to 97 (EGAG), and 178 to 180 (PVV). Mg(2+) is bound by residues Asp-43 and Glu-94.

This sequence belongs to the dethiobiotin synthetase family. In terms of assembly, homodimer. Requires Mg(2+) as cofactor.

It localises to the cytoplasm. The enzyme catalyses (7R,8S)-7,8-diammoniononanoate + CO2 + ATP = (4R,5S)-dethiobiotin + ADP + phosphate + 3 H(+). It functions in the pathway cofactor biosynthesis; biotin biosynthesis; biotin from 7,8-diaminononanoate: step 1/2. Functionally, catalyzes a mechanistically unusual reaction, the ATP-dependent insertion of CO2 between the N7 and N8 nitrogen atoms of 7,8-diaminopelargonic acid (DAPA, also called 7,8-diammoniononanoate) to form a ureido ring. This is ATP-dependent dethiobiotin synthetase BioD from Sphingopyxis alaskensis (strain DSM 13593 / LMG 18877 / RB2256) (Sphingomonas alaskensis).